A 50-amino-acid polypeptide reads, in one-letter code: Small ribosomal subunit protein uS14 (50 aa).

Zn(2+) is bound by residues C15, C18, C33, and C36.

It belongs to the universal ribosomal protein uS14 family. Zinc-binding uS14 subfamily. Part of the 30S ribosomal subunit. The cofactor is Zn(2+).

In terms of biological role, binds 16S rRNA, required for the assembly of 30S particles. This is Small ribosomal subunit protein uS14 from Methanosarcina mazei (strain ATCC BAA-159 / DSM 3647 / Goe1 / Go1 / JCM 11833 / OCM 88) (Methanosarcina frisia).